Reading from the N-terminus, the 503-residue chain is Poxin-Schlafen (503 aa).

Positions 1-236 are poxin-like; sequence MFYAHAFGGY…SKEERVDYVL (236 aa). H15 serves as the catalytic Proton donor. The active-site Shared with catalytic histidine of dimeric partner is Y136. K140 functions as the Proton acceptor; shared with catalytic histidine of dimeric partner in the catalytic mechanism. The tract at residues 237 to 503 is schlafen-like; it reads MKRLESIHHL…PDEWVSHIKF (267 aa).

The protein in the N-terminal section; belongs to the poxin family. This sequence in the C-terminal section; belongs to the Schlafen protein family. Subgroup poxviridae B3 subfamily. As to quaternary structure, homodimer.

The catalysed reaction is 2',3'-cGAMP + H2O = Gp(2'-5')Ap(3') + H(+). Functionally, nuclease that is responsible for viral evasion of host cGAS-STING innate immunity. Cleaves 2',3'-cGAMP which is produced by host cGAS following recognition of intracellular foreign DNA and blocks the subsequent 2',3'-cGAMP-mediated activation of TMEM173/STING which normally spreads to adjacent cells and activates the interferon and NF-kappa-B immune responses. The sequence is that of Poxin-Schlafen (OPG188) from Cynomys gunnisoni (Gunnison's prairie dog).